Consider the following 375-residue polypeptide: DNA replication and repair protein RecF (375 aa).

30 to 37 (GENAQGKT) is a binding site for ATP.

This sequence belongs to the RecF family.

It localises to the cytoplasm. In terms of biological role, the RecF protein is involved in DNA metabolism; it is required for DNA replication and normal SOS inducibility. RecF binds preferentially to single-stranded, linear DNA. It also seems to bind ATP. This Bacillus cereus (strain G9842) protein is DNA replication and repair protein RecF.